A 145-amino-acid chain; its full sequence is Small ribosomal subunit protein uS12 (145 aa).

The protein belongs to the universal ribosomal protein uS12 family. In terms of assembly, part of the 30S ribosomal subunit.

With S4 and S5 plays an important role in translational accuracy. Located at the interface of the 30S and 50S subunits. This Cenarchaeum symbiosum (strain A) protein is Small ribosomal subunit protein uS12.